Reading from the N-terminus, the 86-residue chain is Kappa-theraphotoxin-Cg1a 1 (86 aa).

The N-terminal stretch at 1–21 (MKVSVLITLAVLGVMFVWASA) is a signal peptide. Positions 22 to 50 (AELEERGSDQRDSPAWLKSMERIFQSGER) are excised as a propeptide. 3 cysteine pairs are disulfide-bonded: Cys52/Cys66, Cys59/Cys71, and Cys65/Cys78. The involved in active face stretch occupies residues 55-56 (MF). Phe84 carries the phenylalanine amide modification.

The protein belongs to the neurotoxin 10 (Hwtx-1) family. 28 (Jztx-11) subfamily. In terms of tissue distribution, expressed by the venom gland.

The protein resides in the secreted. In terms of biological role, this toxin acts as a voltage-dependent gating-modifier. It inhibits the sodium conductance (IC(50)=124 nM) and slows the fast inactivation (EC(50)=1180 nM) of Nav1.5/SCN5A. It significantly shifts the activation to more depolarized voltages and decreases the deactivation of Nav1.5 currents upon extreme depolarization, but only slightly affects voltage-dependence of steady-state inactivation. In addition, this toxin causes an approximately five-fold decrease in the rate of recovery from inactivation and an approximately 1.9-fold reduction in the closed-state inactivation rate. This toxin integrates the functions of site 3 toxins (alpha-scorpion toxins) with site 4 toxins (beta-scorpion and spider toxins) by targeting multiple sites on Nav1.5. Also shows inhibition of voltage-gated potassium channels (5 uM completely inhibits Kv2.1/KCNB1, whereas 5 uM moderately inhibits Kv4.2/KCND2 Kv4.1/KCND1 channels). The sequence is that of Kappa-theraphotoxin-Cg1a 1 from Chilobrachys guangxiensis (Chinese earth tiger tarantula).